Reading from the N-terminus, the 73-residue chain is Tetrahydromethanopterin S-methyltransferase subunit F (73 aa).

The helical transmembrane segment at 52 to 72 threads the bilayer; it reads IGFAAGFLFSLLMVIVLPLLF.

It belongs to the MtrF family. As to quaternary structure, the complex is composed of 8 subunits; MtrA, MtrB, MtrC, MtrD, MtrE, MtrF, MtrG and MtrH.

It localises to the cell membrane. It catalyses the reaction 5-methyl-5,6,7,8-tetrahydromethanopterin + coenzyme M + 2 Na(+)(in) = 5,6,7,8-tetrahydromethanopterin + methyl-coenzyme M + 2 Na(+)(out). It functions in the pathway one-carbon metabolism; methanogenesis from CO(2); methyl-coenzyme M from 5,10-methylene-5,6,7,8-tetrahydromethanopterin: step 2/2. Functionally, part of a complex that catalyzes the formation of methyl-coenzyme M and tetrahydromethanopterin from coenzyme M and methyl-tetrahydromethanopterin. This is an energy-conserving, sodium-ion translocating step. The chain is Tetrahydromethanopterin S-methyltransferase subunit F from Methanosarcina barkeri (strain Fusaro / DSM 804).